A 324-amino-acid polypeptide reads, in one-letter code: tRNA dimethylallyltransferase (324 aa).

Residue 17-24 (GPTASGKT) participates in ATP binding. 19–24 (TASGKT) contributes to the substrate binding site. 3 interaction with substrate tRNA regions span residues 42–45 (DSAL), 166–170 (QRIQR), and 251–256 (RCVGYR).

This sequence belongs to the IPP transferase family. Monomer. It depends on Mg(2+) as a cofactor.

The catalysed reaction is adenosine(37) in tRNA + dimethylallyl diphosphate = N(6)-dimethylallyladenosine(37) in tRNA + diphosphate. In terms of biological role, catalyzes the transfer of a dimethylallyl group onto the adenine at position 37 in tRNAs that read codons beginning with uridine, leading to the formation of N6-(dimethylallyl)adenosine (i(6)A). This Burkholderia pseudomallei (strain 1106a) protein is tRNA dimethylallyltransferase.